A 134-amino-acid polypeptide reads, in one-letter code: Small ribosomal subunit protein bS6 (134 aa).

The segment at 103 to 134 (AAPVKSAEEGTEEVAAEAATEAPAETTTTVEV) is disordered. The segment covering 118 to 134 (AEAATEAPAETTTTVEV) has biased composition (low complexity).

This sequence belongs to the bacterial ribosomal protein bS6 family.

Functionally, binds together with bS18 to 16S ribosomal RNA. This chain is Small ribosomal subunit protein bS6, found in Geobacter sp. (strain M21).